The primary structure comprises 202 residues: Glycerol-3-phosphate acyltransferase (202 aa).

The next 5 helical transmembrane spans lie at 11–31, 60–80, 88–108, 117–137, and 162–182; these read LLLFWGGIGYLLGSVPFGMVI, AAAAATLLLDGGKGAAAVLLA, AAQLAGLLAFLGHCFPVWLGF, FLGLMLALAWPVGIACCLTWL, and LLLGAPQAAVLSALLALVILW.

The protein belongs to the PlsY family. In terms of assembly, probably interacts with PlsX.

The protein resides in the cell inner membrane. The catalysed reaction is an acyl phosphate + sn-glycerol 3-phosphate = a 1-acyl-sn-glycero-3-phosphate + phosphate. Its pathway is lipid metabolism; phospholipid metabolism. In terms of biological role, catalyzes the transfer of an acyl group from acyl-phosphate (acyl-PO(4)) to glycerol-3-phosphate (G3P) to form lysophosphatidic acid (LPA). This enzyme utilizes acyl-phosphate as fatty acyl donor, but not acyl-CoA or acyl-ACP. In Ruegeria sp. (strain TM1040) (Silicibacter sp.), this protein is Glycerol-3-phosphate acyltransferase.